The primary structure comprises 177 residues: ATP synthase subunit delta (177 aa).

It belongs to the ATPase delta chain family. F-type ATPases have 2 components, F(1) - the catalytic core - and F(0) - the membrane proton channel. F(1) has five subunits: alpha(3), beta(3), gamma(1), delta(1), epsilon(1). F(0) has three main subunits: a(1), b(2) and c(10-14). The alpha and beta chains form an alternating ring which encloses part of the gamma chain. F(1) is attached to F(0) by a central stalk formed by the gamma and epsilon chains, while a peripheral stalk is formed by the delta and b chains.

The protein localises to the cell inner membrane. Functionally, f(1)F(0) ATP synthase produces ATP from ADP in the presence of a proton or sodium gradient. F-type ATPases consist of two structural domains, F(1) containing the extramembraneous catalytic core and F(0) containing the membrane proton channel, linked together by a central stalk and a peripheral stalk. During catalysis, ATP synthesis in the catalytic domain of F(1) is coupled via a rotary mechanism of the central stalk subunits to proton translocation. Its function is as follows. This protein is part of the stalk that links CF(0) to CF(1). It either transmits conformational changes from CF(0) to CF(1) or is implicated in proton conduction. The protein is ATP synthase subunit delta of Aeromonas salmonicida (strain A449).